A 155-amino-acid chain; its full sequence is D-aminoacyl-tRNA deacylase (155 aa).

Positions 137 to 138 match the Gly-cisPro motif, important for rejection of L-amino acids motif; sequence GP.

The protein belongs to the DTD family. Homodimer.

The protein resides in the cytoplasm. It carries out the reaction glycyl-tRNA(Ala) + H2O = tRNA(Ala) + glycine + H(+). The enzyme catalyses a D-aminoacyl-tRNA + H2O = a tRNA + a D-alpha-amino acid + H(+). Functionally, an aminoacyl-tRNA editing enzyme that deacylates mischarged D-aminoacyl-tRNAs. Also deacylates mischarged glycyl-tRNA(Ala), protecting cells against glycine mischarging by AlaRS. Acts via tRNA-based rather than protein-based catalysis; rejects L-amino acids rather than detecting D-amino acids in the active site. By recycling D-aminoacyl-tRNA to D-amino acids and free tRNA molecules, this enzyme counteracts the toxicity associated with the formation of D-aminoacyl-tRNA entities in vivo and helps enforce protein L-homochirality. The polypeptide is D-aminoacyl-tRNA deacylase (Geotalea uraniireducens (strain Rf4) (Geobacter uraniireducens)).